Reading from the N-terminus, the 169-residue chain is Ribosome maturation factor RimM (169 aa).

Positions 97-169 constitute a PRC barrel domain; it reads EDEYYWADLV…TITADWGLDY (73 aa).

The protein belongs to the RimM family. Binds ribosomal protein uS19.

It localises to the cytoplasm. An accessory protein needed during the final step in the assembly of 30S ribosomal subunit, possibly for assembly of the head region. Essential for efficient processing of 16S rRNA. May be needed both before and after RbfA during the maturation of 16S rRNA. It has affinity for free ribosomal 30S subunits but not for 70S ribosomes. This chain is Ribosome maturation factor RimM, found in Neisseria gonorrhoeae (strain ATCC 700825 / FA 1090).